The sequence spans 423 residues: Diels-Alderase pyiF (423 aa).

An N-terminal signal peptide occupies residues 1–17; the sequence is MLPSFIFVYSLLATATA. Asn-60, Asn-92, and Asn-219 each carry an N-linked (GlcNAc...) asparagine glycan.

It belongs to the Diels-Alderase family.

It functions in the pathway mycotoxin biosynthesis. Its function is as follows. Diels-Alderase; part of the gene cluster that mediates the biosynthesis of the mycotoxin pyrichalasin H, a tyrosine-derived cytochalasan that inhibits the growth of rice seedlings, but also inhibits lymphocyte capping and actin polymerization and alters cell morphology. Pyrichalasin H is indicated as the responsible agent for the genus-specific pathogenicity of M.grisea toward crabgrass. The first step in the pathway is catalyzed by the O-methyltransferase pyiA which methylates free tyrosine to generate the precursor O-methyltyrosine. The hybrid PKS-NRPS pyiS, assisted by the enoyl reductase pyiC, are responsible for fusion of the O-methyltyrosine precursor and the polyketide backbone. The polyketide synthase module (PKS) of pyiS is responsible for the synthesis of the polyketide backbone and the downstream nonribosomal peptide synthetase (NRPS) amidates the carboxyl end of the polyketide with the O-methyltyrosine precursor. As the NRPS A-domain demonstrates substrate tolerance, pyiS can also use phenylalanine, tyrosine and even para-chlorophenylalanine as amino acid precursor, which leads to the production of novel cytochalasans, including halogenated cytochalasans. Because pyiS lacks a designated enoylreductase (ER) domain, the required activity is provided the enoyl reductase pyiC. Reduction by the hydrolyase pyiE leads to 1,5-dihydropyrrolone, which is substrate for dehydration and intra-molecular Diels-Alder cyclization by the Diels-Alderase pyiF to yield the required isoindolone-fused macrocycle. The tailoring cytochrome P450 monooxygenases piyD and piyG catalyze the hydroxylation at C-18 and C-7, respectivily, whereas the short-chain dehydrogenase/reductase pyiH reduces the carbonyl at C-21 in preparation for the transfer of an acetyl group by the acetyltransferase pyiB. These 3 reactions whose order is not clear yet, lead to the production of O-methylpyrichalasin J, a deacetylated pyrichalasin H. Finally, pyiB to converts O-methylpyrichalasin J into the final product pyrichalasin H via acetylation of C-21. In Pyricularia grisea (Crabgrass-specific blast fungus), this protein is Diels-Alderase pyiF.